The primary structure comprises 312 residues: Polyamine aminopropyltransferase (312 aa).

The PABS domain maps to 7–247; sequence FFWAQEYFTP…GPLGFALAAQ (241 aa). An S-methyl-5'-thioadenosine-binding site is contributed by glutamine 36. Histidine 67 and glutamate 95 together coordinate spermidine. S-methyl-5'-thioadenosine contacts are provided by residues aspartate 115 and 147–148; that span reads DA. Catalysis depends on aspartate 165, which acts as the Proton acceptor. An S-methyl-5'-thioadenosine-binding site is contributed by proline 174.

Belongs to the spermidine/spermine synthase family. As to quaternary structure, homodimer or homotetramer.

The protein localises to the cytoplasm. It carries out the reaction S-adenosyl 3-(methylsulfanyl)propylamine + putrescine = S-methyl-5'-thioadenosine + spermidine + H(+). Its pathway is amine and polyamine biosynthesis; spermidine biosynthesis; spermidine from putrescine: step 1/1. Functionally, catalyzes the irreversible transfer of a propylamine group from the amino donor S-adenosylmethioninamine (decarboxy-AdoMet) to putrescine (1,4-diaminobutane) to yield spermidine. The protein is Polyamine aminopropyltransferase of Synechococcus sp. (strain JA-3-3Ab) (Cyanobacteria bacterium Yellowstone A-Prime).